Here is a 404-residue protein sequence, read N- to C-terminus: Serine/threonine transporter SstT (404 aa).

9 helical membrane-spanning segments follow: residues 12-32 (GGNLVLRIAIGLVLGACLALV), 53-73 (AIAPILVFVLVLSAIANKEVG), 81-101 (ILVMYVLGTFVAALTAVVLSF), 140-160 (ALANANFIGILAWAIGLGIAL), 177-197 (AVSFVVKVVIAFAPIGVFGLV), 216-236 (LGVLLGAMVIVAFVLNPLIVF), 287-307 (VAIPLGATINMAGAAITVTVL), 329-349 (IVASVCACGASGVAGGSLLLI), and 356-376 (FNIPNDIAAQVIGVGFIIGVI).

The protein belongs to the dicarboxylate/amino acid:cation symporter (DAACS) (TC 2.A.23) family.

The protein resides in the cell inner membrane. The enzyme catalyses L-serine(in) + Na(+)(in) = L-serine(out) + Na(+)(out). It carries out the reaction L-threonine(in) + Na(+)(in) = L-threonine(out) + Na(+)(out). Involved in the import of serine and threonine into the cell, with the concomitant import of sodium (symport system). The polypeptide is Serine/threonine transporter SstT (Actinobacillus pleuropneumoniae serotype 7 (strain AP76)).